Here is a 320-residue protein sequence, read N- to C-terminus: Malate dehydrogenase (320 aa).

NAD(+) contacts are provided by residues 10-15 (GSGMIG) and Asp-34. Arg-83 and Arg-89 together coordinate substrate. NAD(+)-binding positions include Asn-96 and 119–121 (ITN). Positions 121 and 152 each coordinate substrate. His-176 (proton acceptor) is an active-site residue.

Belongs to the LDH/MDH superfamily. MDH type 3 family.

It carries out the reaction (S)-malate + NAD(+) = oxaloacetate + NADH + H(+). Functionally, catalyzes the reversible oxidation of malate to oxaloacetate. This is Malate dehydrogenase from Bartonella henselae (strain ATCC 49882 / DSM 28221 / CCUG 30454 / Houston 1) (Rochalimaea henselae).